The primary structure comprises 417 residues: NADH-quinone oxidoreductase subunit D (417 aa).

This sequence belongs to the complex I 49 kDa subunit family. In terms of assembly, NDH-1 is composed of 14 different subunits. Subunits NuoB, C, D, E, F, and G constitute the peripheral sector of the complex.

Its subcellular location is the cell inner membrane. It carries out the reaction a quinone + NADH + 5 H(+)(in) = a quinol + NAD(+) + 4 H(+)(out). Its function is as follows. NDH-1 shuttles electrons from NADH, via FMN and iron-sulfur (Fe-S) centers, to quinones in the respiratory chain. The immediate electron acceptor for the enzyme in this species is believed to be ubiquinone. Couples the redox reaction to proton translocation (for every two electrons transferred, four hydrogen ions are translocated across the cytoplasmic membrane), and thus conserves the redox energy in a proton gradient. This Burkholderia orbicola (strain MC0-3) protein is NADH-quinone oxidoreductase subunit D.